A 496-amino-acid chain; its full sequence is tRNA-2-methylthio-N(6)-dimethylallyladenosine synthase (496 aa).

Residues 43–160 (KKVFVTTQGC…LPELYDQSHQ (118 aa)) enclose the MTTase N-terminal domain. Positions 52, 89, 123, 204, 208, and 211 each coordinate [4Fe-4S] cluster. The Radical SAM core domain occupies 190-422 (RVEGFKAFVS…QKVIIDSTLA (233 aa)). The region spanning 425–493 (HEMVGTTTRV…PHMVKGEIEA (69 aa)) is the TRAM domain.

Belongs to the methylthiotransferase family. MiaB subfamily. Monomer. It depends on [4Fe-4S] cluster as a cofactor.

The protein localises to the cytoplasm. The catalysed reaction is N(6)-dimethylallyladenosine(37) in tRNA + (sulfur carrier)-SH + AH2 + 2 S-adenosyl-L-methionine = 2-methylsulfanyl-N(6)-dimethylallyladenosine(37) in tRNA + (sulfur carrier)-H + 5'-deoxyadenosine + L-methionine + A + S-adenosyl-L-homocysteine + 2 H(+). Catalyzes the methylthiolation of N6-(dimethylallyl)adenosine (i(6)A), leading to the formation of 2-methylthio-N6-(dimethylallyl)adenosine (ms(2)i(6)A) at position 37 in tRNAs that read codons beginning with uridine. This Psychrobacter arcticus (strain DSM 17307 / VKM B-2377 / 273-4) protein is tRNA-2-methylthio-N(6)-dimethylallyladenosine synthase.